The primary structure comprises 602 residues: Alpha-glucosides permease MPH3 (602 aa).

Residues 1–106 (MKNLSFLINR…AAAWSLLVST (106 aa)) lie on the Cytoplasmic side of the membrane. The chain crosses the membrane as a helical span at residues 107–127 (TLIMEGYDTAILGAFYALPIF). At 128-142 (QRKFGSQNDKTGEWE) the chain is on the extracellular side. A helical membrane pass occupies residues 143-163 (ISASWQIGLTLCYMAGEIVGL). Residues 164–178 (QLTGPSVDLVGNRYT) lie on the Cytoplasmic side of the membrane. The helical transmembrane segment at 179-199 (LIIALFFLAAFTFILYFCNSL) threads the bilayer. Position 200 (G200) is a topological domain, extracellular. The helical transmembrane segment at 201 to 221 (MIAVGQALCGMPWGCFQCLTV) threads the bilayer. At 222–234 (SYASEICPLALRY) the chain is on the cytoplasmic side. A helical membrane pass occupies residues 235 to 255 (YLTTYSNLCWLFGQLFAAGIM). Topologically, residues 256-270 (KNSQKKYADSELGYK) are extracellular. The helical transmembrane segment at 271–291 (LPFALQWILPVPLALGIFFAP) threads the bilayer. The Cytoplasmic portion of the chain corresponds to 292–363 (ESPWWLVKKG…EDKINRRRTR (72 aa)). A helical transmembrane segment spans residues 364–384 (ITCLCWAGQATCGSILIGYST). Residues 385–397 (YFYEKAGVSTEMS) lie on the Extracellular side of the membrane. The helical transmembrane segment at 398–418 (FTFSIIQYCLGICATFLSWWA) threads the bilayer. At 419-426 (SKYFGRYD) the chain is on the cytoplasmic side. A helical transmembrane segment spans residues 427 to 447 (LYAFGLAFQTIVFFIIGGLGC). The Extracellular portion of the chain corresponds to 448–459 (SSTHGSKMGSGS). Residues 460–480 (LLMAVAFFYNLGIAPVVFCLV) traverse the membrane as a helical segment. Residues 481-492 (SEMPSSRLRTKT) lie on the Cytoplasmic side of the membrane. Residues 493-513 (IILARNTYNVVSIICSVLILY) form a helical membrane-spanning segment. The Extracellular portion of the chain corresponds to 514–525 (QLNSKKWNWGAK). A helical transmembrane segment spans residues 526–546 (SGFFWGVLCFCTLIWAVVDLP). Residues 547–602 (ETAGKTFVEINELFKLGVSARKFKSTKVDPFVVKTPPKDVSHNDPKGDIEASIAEE) are Cytoplasmic-facing. Residues 582-595 (PPKDVSHNDPKGDI) show a composition bias toward basic and acidic residues. The disordered stretch occupies residues 582–602 (PPKDVSHNDPKGDIEASIAEE).

It belongs to the major facilitator superfamily. Sugar transporter (TC 2.A.1.1) family.

The protein localises to the cell membrane. Its function is as follows. High-affinity uptake of maltose and maltotriose. Also transports alpha-methylglucoside, glucose and turanose but not melezitose or trehalose. This Saccharomyces cerevisiae (strain ATCC 204508 / S288c) (Baker's yeast) protein is Alpha-glucosides permease MPH3 (MPH3).